Reading from the N-terminus, the 101-residue chain is MKICEICGLPKDLCVCEEIAREVQKVKVYTVRRRFGKLMTIVEGIDEHDIDIRELTKTLKSKCACGGTSKKGQIELQGDHKRKVKEVLAGMGFSSDTIEIK.

The protein belongs to the SUI1 family.

The protein is Protein translation factor SUI1 homolog of Methanosphaera stadtmanae (strain ATCC 43021 / DSM 3091 / JCM 11832 / MCB-3).